The sequence spans 586 residues: ATPase family AAA domain-containing protein 3A (586 aa).

2 disordered regions span residues 1-55 (MSWL…PTGL) and 111-134 (QAEE…QYQD). S2 carries the post-translational modification N-acetylserine. The interval 2–50 (SWLFGINKGPKGEGAGPPPPLPPAQPGAEGGGDRGLGDRPAPKDKWSNF) is required for interaction with the inner surface of the mitochondrial outer membrane. Topologically, residues 2–246 (SWLFGINKGP…FRAFVTDWDK (245 aa)) are mitochondrial intermembrane. Pro residues predominate over residues 17–26 (GPPPPLPPAQ). Basic and acidic residues-rich tracts occupy residues 32–48 (GGDR…DKWS) and 111–125 (QAEE…ETRQ). Residues 86–219 (QLEQQSKLKE…QIRLKAAEHR (134 aa)) adopt a coiled-coil conformation. Residues 247-264 (VTATVAGLTLLAVGVYSA) form a helical membrane-spanning segment. The Mitochondrial matrix portion of the chain corresponds to 265–586 (KNATLVAGRF…PGRGDEPSPS (322 aa)). The interval 290 to 305 (RITVLEALRHPIQVSR) is S100B-binding. Residue S321 is modified to Phosphoserine. 352–359 (GPPGTGKT) is a binding site for ATP. K491 carries the post-translational modification N6-acetyllysine.

This sequence belongs to the AAA ATPase family. In terms of assembly, can form homooligomers. Homodimer formation at the N-terminus may be regulated by ATP and is required for the interaction with the inner surface of the mitochondrial outer membrane and correct mitochondrial homeostasis. Interacts with components of the mitochondrial ribosome and with other proteins involved in mitochondrial RNA metabolism. May also interact with protein involved in lipid metabolism, including STARD9. May interact with FAM210A. Interacts with GADD45GIP1. Interacts with S100B in a Ca(+2)- and Zn(+2)-dependent manner; this interaction probably occurs in the cytosol prior to mitochondrial targeting. S100B could assist ATAD3A cytoplasmic processing, preventing aggregation and favoring mitochondrial localization. Interacts with HSP60/HSPD1. Forms heterooligomers with ATAD3B; this interaction may affect ATAD3A activity. Interacts with CLPB. Interacts with EIF2AK3/PERK; ATAD3A and EIF2S1/eIF-2-alpha occupy a common binding site within the cytoplasmic loop of EIF2AK3/PERK, leading to prevent EIF2AK3/PERK association with its substrate EIF2S1/eIF-2-alpha. Overexpressed in lung adenocarcinomas (at protein level).

The protein localises to the mitochondrion inner membrane. It localises to the mitochondrion matrix. It is found in the mitochondrion nucleoid. The catalysed reaction is ATP + H2O = ADP + phosphate + H(+). Its function is as follows. Essential for mitochondrial network organization, mitochondrial metabolism and cell growth at organism and cellular level. May play an important role in mitochondrial protein synthesis. May also participate in mitochondrial DNA replication. May bind to mitochondrial DNA D-loops and contribute to nucleoid stability. Required for enhanced channeling of cholesterol for hormone-dependent steroidogenesis. Involved in mitochondrial-mediated antiviral innate immunity. Required to protect mitochondria from the PERK-mediated unfolded protein response: specifically inhibits the activity of EIF2AK3/PERK at mitochondria-endoplasmic reticulum contact sites, thereby providing a safe haven for mitochondrial protein translation during endoplasmic reticulum stress. Ability to inhibit EIF2AK3/PERK is independent of its ATPase activity. Also involved in the mitochondrial DNA damage response by promoting signaling between damaged genomes and the mitochondrial membrane, leading to activation of the integrated stress response (ISR). This Homo sapiens (Human) protein is ATPase family AAA domain-containing protein 3A.